The following is a 317-amino-acid chain: 3',5'-bisphosphate nucleotidase (317 aa).

Asp46 acts as the Proton acceptor in catalysis. 4 residues coordinate Mg(2+): Glu69, Asp118, Ile120, and Asp121. The Proton acceptor role is filled by Thr123. Thr123 provides a ligand contact to adenosine 3',5'-bisphosphate. 7 residues coordinate AMP: Ser198, His203, Ser227, Lys230, Arg244, Tyr251, and Asp257. The adenosine 3',5'-bisphosphate site is built by His203, Ser227, Lys230, and Arg244. Asp257 is a Mg(2+) binding site. Asp257 is an adenosine 3',5'-bisphosphate binding site.

It belongs to the inositol monophosphatase superfamily. In terms of assembly, monomer. Mg(2+) serves as cofactor.

The protein resides in the cytoplasm. It carries out the reaction adenosine 3',5'-bisphosphate + H2O = AMP + phosphate. The enzyme catalyses 1D-myo-inositol 1,4-bisphosphate + H2O = 1D-myo-inositol 4-phosphate + phosphate. Its activity is regulated as follows. Inhibited by Li(2+). Functionally, phosphatase that converts 3'-phosphoadenosine 5'-phosphate (PAP) to AMP. Is also able to hydrolyze inositol 1,4-bisphosphate but with less efficiency. The polypeptide is 3',5'-bisphosphate nucleotidase (Entamoeba histolytica (strain ATCC 30459 / HM-1:IMSS / ABRM)).